A 51-amino-acid chain; its full sequence is Defensin-like protein 1 (51 aa).

Position 1 is a pyrrolidone carboxylic acid (glutamine 1). 4 disulfide bridges follow: cysteine 4–cysteine 51, cysteine 15–cysteine 36, cysteine 21–cysteine 45, and cysteine 25–cysteine 47.

Forms oligomers in its native state.

Possesses antifungal activity sensitive to inorganic cations. The sequence is that of Defensin-like protein 1 from Sinapis alba (White mustard).